A 198-amino-acid polypeptide reads, in one-letter code: Probable GTP-binding protein EngB (198 aa).

The EngB-type G domain maps to 36 to 198 (SEPQFAFIGR…NLSKLQELLE (163 aa)). GTP is bound by residues 44-51 (GRSNVGKS), 70-74 (GRTQL), 88-91 (DLPG), 155-158 (NKID), and 182-184 (ISA). Mg(2+) contacts are provided by Ser-51 and Thr-72.

It belongs to the TRAFAC class TrmE-Era-EngA-EngB-Septin-like GTPase superfamily. EngB GTPase family. The cofactor is Mg(2+).

In terms of biological role, necessary for normal cell division and for the maintenance of normal septation. The sequence is that of Probable GTP-binding protein EngB from Mesomycoplasma hyopneumoniae (strain 232) (Mycoplasma hyopneumoniae).